The sequence spans 433 residues: Steroid hormone receptor ERR2 (433 aa).

The disordered stretch occupies residues 1–41 (MSSEDRHLGSSCGSFIKTEPSSPSSGIDALSHHSPSGSSDA). The span at 32-41 (HHSPSGSSDA) shows a compositional bias: low complexity. The interaction with NANOG stretch occupies residues 93–211 (YMLNAIPKRL…SPPAKKPLTK (119 aa)). The nuclear receptor DNA-binding region spans 100-186 (KRLCLVCGDI…RVRGGRQKYK (87 aa)). 2 consecutive NR C4-type zinc fingers follow at residues 103-123 (CLVC…CEAC) and 139-163 (CPAT…FMKC). An essential for ESRRB transcriptional activity and interaction with NCOA3 region spans residues 203–433 (PPAKKPLTKI…LFLEMLEAKV (231 aa)). In terms of domain architecture, NR LBD spans 208 to 432 (PLTKIVSYLL…KLFLEMLEAK (225 aa)).

This sequence belongs to the nuclear hormone receptor family. NR3 subfamily. In terms of assembly, binds DNA as a monomer. Interacts with NR0B1; represses ESRRB activity at the GATA6 promoter. Interacts with NANOG; reciprocally modulates their transcriptional activities and activates POU5F1 expression. Interacts with NCOA3; mediates the interaction between ESRRB and RNA polymerase II complexes and allows NCOA3 corecruitment to ESRRB, KLF4, NANOG, and SOX2 enhancer regions to trigger ESRRB-dependent gene activation involved in self-renewal and pluripotency. Interacts with KDM1A; co-occupes the core set of ESRRB targets including ELF5 and EOMES. Interacts with the multiprotein complex Integrator, at least composed of INTS1, INTS2, INTS3, INTS4, INTS5, INTS6, INTS7, INTS8, INTS9/RC74, INTS10, INTS11/CPSF3L and INTS12; ESRRB is probably not a core component of the integrator complex and associates to integrator via its interaction with INTS1 and INTS9; attracts the transcriptional machinery. Interacts with JARID2. Interacts with POU5F1; recruits ESRRB near the POU5F1-SOX2 element in the NANOG proximal promoter leading to activation of NANOG expression; the interaction is DNA independent. Post-translationally, acetylated by PCAF/KAT2 (in vitro).

It localises to the nucleus. The protein resides in the cytoplasm. Its subcellular location is the chromosome. Its function is as follows. Transcription factor that binds a canonical ESRRB recognition (ERRE) sequence 5'TCAAGGTCA-3' localized on promoter and enhancer of targets genes regulating their expression or their transcription activity. Plays a role, in a LIF independent manner, in maintainance of self-renewal and pluripotency of embryonic and trophoblast stem cells through different signaling pathways including FGF signaling pathway and Wnt signaling pathways. Involved in morula development (2-16 cells embryos) by acting as a regulator at the 8-cell stage. Upon FGF signaling pathway activation, interacts with KDM1A by directly binding to enhancer site of ELF5 and EOMES and activating their transcription leading to self-renewal of trophoblast stem cells. Also regulates expression of multiple rod-specific genes and is required for survival of this cell type. Plays a role as transcription factor activator of GATA6, NR0B1, POU5F1 and PERM1. Plays a role as transcription factor repressor of NFE2L2 transcriptional activity and ESR1 transcriptional activity. During mitosis remains bound to a subset of interphase target genes, including pluripotency regulators, through the canonical ESRRB recognition (ERRE) sequence, leading to their transcriptional activation in early G1 phase. Can coassemble on structured DNA elements with other transcription factors like SOX2, POU5F1, KDM1A and NCOA3 to trigger ESRRB-dependent gene activation. This mechanism, in the case of SOX2 corecruitment prevents the embryonic stem cells (ESCs) to epiblast stem cells (EpiSC) transition through positive regulation of NR0B1 that inhibits the EpiSC transcriptional program. Also plays a role inner ear development by controlling expression of ion channels and transporters and in early placentation. This chain is Steroid hormone receptor ERR2, found in Rattus norvegicus (Rat).